The chain runs to 638 residues: Autolysin (638 aa).

An N-terminal signal peptide occupies residues 1–28; it reads MSLATRRFGAAAALLVAACVLCTAPAWA. A propeptide spans 29-183 (activation peptide); sequence QNETTGTGMV…LKSILKGSQK (155 aa). Residue Asn30 is glycosylated (N-linked (GlcNAc...) asparagine). The Cysteine switch signature appears at 95 to 102; sequence PRCNVPRA. Cys97 lines the Zn(2+) pocket. Asn126 carries N-linked (GlcNAc...) asparagine glycosylation. The segment at 269–292 is disordered; it reads VTPPPRPPRPPRPPPRAGSTISSL. Positions 270–284 are enriched in pro residues; the sequence is TPPPRPPRPPRPPPR. A glycan (N-linked (GlcNAc...) asparagine) is linked at Asn296. His396 contributes to the Zn(2+) binding site. The active site involves Glu397. Residues His400 and His406 each contribute to the Zn(2+) site. Residues Asn458, Asn465, Asn470, and Asn523 are each glycosylated (N-linked (GlcNAc...) asparagine).

Belongs to the peptidase M11 family. Zn(2+) serves as cofactor. Present in 2 forms: an inactive V-form in vegetative cells and an active and soluble G-form. The V-form enzyme may be converted to the G-form enzyme during gametic differentiation under nitrogen-starved conditions.

It is found in the periplasm. The protein resides in the secreted. It localises to the cell wall. The catalysed reaction is Cleavage of the proline- and hydroxyproline-rich proteins of the Chlamydomonas cell wall. Also cleaves azocasein, gelatin and Leu-Trp-Met-|-Arg-Phe-Ala.. In terms of biological role, mediates digestion of the cell walls of the 2 mating type gametes during mating as a necessary prelude to cell fusion. This enzyme acts specifically on the framework proteins (inner wall) of the cell wall, cleaving several model peptides at specific sites. The protein is Autolysin of Chlamydomonas reinhardtii (Chlamydomonas smithii).